Here is a 122-residue protein sequence, read N- to C-terminus: Holo-[acyl-carrier-protein] synthase (122 aa).

The Mg(2+) site is built by Asp9 and Glu58.

This sequence belongs to the P-Pant transferase superfamily. AcpS family. Mg(2+) serves as cofactor.

The protein resides in the cytoplasm. The catalysed reaction is apo-[ACP] + CoA = holo-[ACP] + adenosine 3',5'-bisphosphate + H(+). Transfers the 4'-phosphopantetheine moiety from coenzyme A to a Ser of acyl-carrier-protein. The protein is Holo-[acyl-carrier-protein] synthase of Chlamydia pneumoniae (Chlamydophila pneumoniae).